The primary structure comprises 392 residues: Galactokinase (392 aa).

4 residues coordinate alpha-D-galactose: arginine 37, glutamate 43, histidine 44, and aspartate 46. Glycine 136, glycine 138, serine 140, and serine 141 together coordinate ATP. Aspartate 186 lines the alpha-D-galactose pocket. The Proton acceptor role is filled by aspartate 186. Residue serine 230 is modified to Phosphoserine. Residue tyrosine 236 coordinates alpha-D-galactose.

This sequence belongs to the GHMP kinase family. GalK subfamily. Homodimer.

It carries out the reaction alpha-D-galactose + ATP = alpha-D-galactose 1-phosphate + ADP + H(+). It functions in the pathway carbohydrate metabolism; galactose metabolism. Its function is as follows. Catalyzes the transfer of a phosphate from ATP to alpha-D-galactose and participates in the first committed step in the catabolism of galactose. The chain is Galactokinase (Galk1) from Mus musculus (Mouse).